The chain runs to 294 residues: MLSSMARIAIIGGGSIGEALLSGLLRAGRQVKDLVVAERMPDRARYLADTYSVLVTSVTDAVENAMFVVVAVKPTDVESVMGDLVQAAAVANDSAEQVLVTVAAGVTITYLESKLPAGTPVVRAMPNAAALVGAGVTVLAKGRFVTGQQFEDVLAMFDAVGGVLTVPESQMDAVTAVSGSGPAYFFLLVEALVDAGVAVGLTRQVATELAAQTMAGSAAMLLERMDQDRHSAEVAPLGAQVDVPAAQLRATITSPGGTTAAALRELERGGLRMVVDAAVQAAKIRSEQLRITSE.

This sequence belongs to the pyrroline-5-carboxylate reductase family.

Its subcellular location is the cytoplasm. The catalysed reaction is L-proline + NADP(+) = (S)-1-pyrroline-5-carboxylate + NADPH + 2 H(+). It carries out the reaction L-proline + NAD(+) = (S)-1-pyrroline-5-carboxylate + NADH + 2 H(+). The protein operates within amino-acid biosynthesis; L-proline biosynthesis; L-proline from L-glutamate 5-semialdehyde: step 1/1. Its function is as follows. Catalyzes the reduction of 1-pyrroline-5-carboxylate (PCA) to L-proline. The polypeptide is Pyrroline-5-carboxylate reductase (Mycobacterium leprae (strain TN)).